Here is a 207-residue protein sequence, read N- to C-terminus: Large ribosomal subunit protein uL4 (207 aa).

The disordered stretch occupies residues 44–71 (RRQGTQSAKTRAEVRGGGRKPWKQKGTG). The segment covering 60-71 (GGRKPWKQKGTG) has biased composition (basic residues).

Belongs to the universal ribosomal protein uL4 family. As to quaternary structure, part of the 50S ribosomal subunit.

In terms of biological role, one of the primary rRNA binding proteins, this protein initially binds near the 5'-end of the 23S rRNA. It is important during the early stages of 50S assembly. It makes multiple contacts with different domains of the 23S rRNA in the assembled 50S subunit and ribosome. Its function is as follows. Forms part of the polypeptide exit tunnel. The sequence is that of Large ribosomal subunit protein uL4 from Alkaliphilus oremlandii (strain OhILAs) (Clostridium oremlandii (strain OhILAs)).